A 268-amino-acid chain; its full sequence is Movement protein (268 aa).

The interval 218–246 (SDVRKGKISSSDRSAPNKNYRNVKDFGGM) is disordered. A compositionally biased stretch (polar residues) spans 225–237 (ISSSDRSAPNKNY).

It belongs to the tobamovirus movement protein family. As to quaternary structure, binds to host RBCS at the plasmodesmata; this interaction seems required for viral systemic movement. In resistant plants, interacts with host MBP2C at host microtubules; this interaction prevents virus cell to cell movement. In resistant plants, interacts with host resistance (R) protein (e.g. tomato ToMV resistance protein TM-2(2), AC Q71BG9) at the host plasma membrane; this interaction triggers host defense responses leading to programmed cell death.

It is found in the host cytoplasm. The protein resides in the host cytoskeleton. It localises to the host cell junction. The protein localises to the host plasmodesma. Its function is as follows. Transports viral genome to neighboring plant cells directly through plasmosdesmata, without any budding. The movement protein allows efficient cell to cell propagation, by bypassing the host cell wall barrier. Forms a ribonucleoprotein complex with viral RNA. Binds microtubules and modulates microtubule stability. Can bind double-stranded DNA. Triggers host hypersensitive defense reaction in incompatible plants harboring resistance (R) proteins. This is Movement protein (MP) from Nicotiana tabacum (Common tobacco).